The sequence spans 439 residues: Glycosyl hydrolase DigH (439 aa).

Residues 1-27 (MDICSRNEKLAIRRPAILVALALLLCS) form the signal peptide. Cysteine 28 carries the N-palmitoyl cysteine lipid modification. Residue cysteine 28 is the site of S-diacylglycerol cysteine attachment. Residues 34–54 (ESMVTPPAGSKPPATTQQSSQ) form a disordered region.

Belongs to the glycosyl hydrolase-like 10 (GHL10) family.

The protein resides in the cell outer membrane. Its function is as follows. Divisome-localized glycosyl hydrolase that cleaves peptide-free (denuded) peptidoglycans. This Escherichia coli O6:H1 (strain CFT073 / ATCC 700928 / UPEC) protein is Glycosyl hydrolase DigH.